The primary structure comprises 253 residues: 5'-nucleotidase SurE (253 aa).

Residues D8, D9, S40, and N93 each contribute to the a divalent metal cation site.

The protein belongs to the SurE nucleotidase family. The cofactor is a divalent metal cation.

The protein resides in the cytoplasm. It carries out the reaction a ribonucleoside 5'-phosphate + H2O = a ribonucleoside + phosphate. Functionally, nucleotidase that shows phosphatase activity on nucleoside 5'-monophosphates. The chain is 5'-nucleotidase SurE from Methylobacterium nodulans (strain LMG 21967 / CNCM I-2342 / ORS 2060).